We begin with the raw amino-acid sequence, 381 residues long: Creatine kinase M-type (381 aa).

A Phosphagen kinase N-terminal domain is found at 11-98; sequence KLNYSAAEEF…FDPVIEDRHG (88 aa). The Phosphagen kinase C-terminal domain occupies 125 to 367; it reads YVLSSRVRTG…KLMVEMEKRL (243 aa). ATP is bound by residues 128–132, histidine 191, arginine 236, arginine 292, 320–325, and aspartate 335; these read SSRVR and RGTGGV.

The protein belongs to the ATP:guanido phosphotransferase family. In terms of assembly, dimer of identical or non-identical chains. With MM being the major form in skeletal muscle and myocardium, MB existing in myocardium, and BB existing in many tissues, especially brain.

The protein localises to the cytoplasm. The catalysed reaction is creatine + ATP = N-phosphocreatine + ADP + H(+). Reversibly catalyzes the transfer of phosphate between ATP and various phosphogens (e.g. creatine phosphate). Creatine kinase isoenzymes play a central role in energy transduction in tissues with large, fluctuating energy demands, such as skeletal muscle, heart, brain and spermatozoa. This is Creatine kinase M-type from Tetronarce californica (Pacific electric ray).